The sequence spans 159 residues: Large ribosomal subunit protein uL30 (159 aa).

The protein belongs to the universal ribosomal protein uL30 family. As to quaternary structure, part of the 50S ribosomal subunit.

This is Large ribosomal subunit protein uL30 from Ignicoccus hospitalis (strain KIN4/I / DSM 18386 / JCM 14125).